Reading from the N-terminus, the 69-residue chain is U-scoloptoxin(21)-Sm2a (69 aa).

The N-terminal stretch at 1–21 (MFFLGFIIVCASEEQSDNRLP) is a signal peptide. The segment at 46-69 (ANDPNGPGRRRRSPIVREEILRHP) is disordered. Positions 60-69 (IVREEILRHP) are enriched in basic and acidic residues.

This sequence belongs to the scoloptoxin-21 family. As to expression, expressed by the venom gland.

The protein localises to the secreted. This is U-scoloptoxin(21)-Sm2a from Scolopendra morsitans (Tanzanian blue ringleg centipede).